We begin with the raw amino-acid sequence, 120 residues long: U13-lycotoxin-Ls1a (120 aa).

A signal peptide spans 1–16 (MKILFVLISILYAVYC). A propeptide spanning residues 17 to 54 (FSSEEDVDSAYLANELEPVEDINSEQYAALEPKEEQGR) is cleaved from the precursor. Intrachain disulfides connect Cys56–Cys70, Cys63–Cys76, Cys69–Cys87, and Cys78–Cys85. The Agouti domain occupies 56–95 (CADMGQDCKDDCDCCLNIATCNCWFGRYFCSCTFGDYQTC).

The protein belongs to the neurotoxin 05 (agouti) family. In terms of processing, contains 6 disulfide bonds. As to expression, expressed by the venom gland.

The protein localises to the secreted. This is U13-lycotoxin-Ls1a from Lycosa singoriensis (Wolf spider).